The sequence spans 116 residues: Beta-2-microglobulin (116 aa).

Residues 1–19 form the signal peptide; sequence MKFLLSFVVLAVFSASAFA. The region spanning 24–111 is the Ig-like C1-type domain; that stretch reads PKIQVYSRNP…RHLKETKNIS (88 aa). An intrachain disulfide couples Cys44 to Cys99.

The protein belongs to the beta-2-microglobulin family. In terms of assembly, heterodimer of an alpha chain and a beta chain. Beta-2-microglobulin is the beta-chain of major histocompatibility complex class I molecules.

The protein resides in the secreted. Functionally, component of the class I major histocompatibility complex (MHC). Involved in the presentation of peptide antigens to the immune system. In Ictalurus punctatus (Channel catfish), this protein is Beta-2-microglobulin (b2m).